The following is a 490-amino-acid chain: Adenylosuccinate synthetase 1, chloroplastic (490 aa).

The transit peptide at 1–47 (MSLSTLSHPAAAAAAATGSGKSHFRTAPAAQSVRFPKARPPVPAAVS) directs the protein to the chloroplast. The tract at residues 14–36 (AAATGSGKSHFRTAPAAQSVRFP) is disordered. Residues 77–83 (GDEGKGK) and 105–107 (GHT) contribute to the GTP site. The active-site Proton acceptor is D78. D78 and G105 together coordinate Mg(2+). Residues 78-81 (DEGK), 103-106 (NAGH), T195, R209, Q289, T304, and R368 contribute to the IMP site. The active-site Proton donor is the H106. 364–370 (TTTGRPR) serves as a coordination point for substrate. GTP is bound by residues R370, 396 to 398 (KLD), and 479 to 481 (GVG).

It belongs to the adenylosuccinate synthetase family. Homodimer. Mg(2+) is required as a cofactor.

The protein resides in the plastid. It is found in the chloroplast. It carries out the reaction IMP + L-aspartate + GTP = N(6)-(1,2-dicarboxyethyl)-AMP + GDP + phosphate + 2 H(+). It participates in purine metabolism; AMP biosynthesis via de novo pathway; AMP from IMP: step 1/2. Its function is as follows. Plays an important role in the de novo pathway and in the salvage pathway of purine nucleotide biosynthesis. Catalyzes the first committed step in the biosynthesis of AMP from IMP. The polypeptide is Adenylosuccinate synthetase 1, chloroplastic (Sorghum bicolor (Sorghum)).